The sequence spans 436 residues: MANIFEVPQPGNDLLEKADQVRLASIKISQTENHNRIKALNSMADCLEKSTKEILEANNEDYTRAQKKGISKALLSRLKLSKEKLNSGIEGVRKVGDLADPVNQVQIKRELAKGLILERKTVPIGVLGVIFESRPDAVMQISSLAIRSGNGVMLKGGSEANLTNTAIVKALKKGLYESGLDKNAICLLTSRKDSMSMLNLEKYINLIIPRGSNELVKFIQENTRIPVLGHADGICHLFIDNEANLEMALSVALDSKIQYPAACNAIETLLVHKDIAQVFLEKAIPLFNSNDVKLIGDKRTVELGVKYEASVEDWQTEYLDLILSIKIVDDLEEAINHIQKFSSKHTDGIITENSTSAKKFMNVVDSAGVFHNCSTRFADGFRYGFGAEIGISTQTLPPRGPVGLEGLVTYKYFLNGDGNIVDDFSSGKAIYTHKDL.

The protein belongs to the gamma-glutamyl phosphate reductase family.

Its subcellular location is the cytoplasm. It catalyses the reaction L-glutamate 5-semialdehyde + phosphate + NADP(+) = L-glutamyl 5-phosphate + NADPH + H(+). The protein operates within amino-acid biosynthesis; L-proline biosynthesis; L-glutamate 5-semialdehyde from L-glutamate: step 2/2. Catalyzes the NADPH-dependent reduction of L-glutamate 5-phosphate into L-glutamate 5-semialdehyde and phosphate. The product spontaneously undergoes cyclization to form 1-pyrroline-5-carboxylate. This Prochlorococcus marinus (strain MIT 9312) protein is Gamma-glutamyl phosphate reductase.